Consider the following 179-residue polypeptide: ATP-dependent protease subunit HslV (179 aa).

The active site involves Thr7. Na(+) is bound by residues Gly162, Cys165, and Thr168.

It belongs to the peptidase T1B family. HslV subfamily. In terms of assembly, a double ring-shaped homohexamer of HslV is capped on each side by a ring-shaped HslU homohexamer. The assembly of the HslU/HslV complex is dependent on binding of ATP.

It localises to the cytoplasm. The catalysed reaction is ATP-dependent cleavage of peptide bonds with broad specificity.. Allosterically activated by HslU binding. In terms of biological role, protease subunit of a proteasome-like degradation complex believed to be a general protein degrading machinery. The sequence is that of ATP-dependent protease subunit HslV from Bordetella avium (strain 197N).